The following is a 332-amino-acid chain: Twinfilin-1 (332 aa).

The region spanning 5 to 132 (SGIVAEQALL…VDLKNFDSAR (128 aa)) is the ADF-H 1 domain. 2 positions are modified to phosphoserine: Ser167 and Ser172. Residues 173–300 (PLSLTFRVNS…DKSLLMATNK (128 aa)) form the ADF-H 2 domain. Residues 301 to 332 (EDSLDHGSNPDLPNKSNLKFNKPKGPLRKRRT) are disordered. Residues 321 to 332 (NKPKGPLRKRRT) are compositionally biased toward basic residues.

It belongs to the actin-binding proteins ADF family. Twinfilin subfamily. Interacts with G-actin; ADP-actin form.

It is found in the cytoplasm. Its subcellular location is the cytoskeleton. Actin-binding protein involved in motile and morphological processes. Inhibits actin polymerization, likely by sequestering G-actin. Prevents actin filament assembly by forming a 1:1 complex with actin monomers, and inhibits the nucleotide exchange reaction of actin monomers. The sequence is that of Twinfilin-1 (TWF1) from Saccharomyces cerevisiae (strain ATCC 204508 / S288c) (Baker's yeast).